Reading from the N-terminus, the 137-residue chain is Small heat shock protein IbpA (137 aa).

The 110-residue stretch at 28-137 (SQSNGGYPPY…ANKPRRIEIN (110 aa)) folds into the sHSP domain.

This sequence belongs to the small heat shock protein (HSP20) family. As to quaternary structure, monomer. Forms homomultimers of about 100-150 subunits at optimal growth temperatures. Conformation changes to monomers at high temperatures or high ionic concentrations.

It is found in the cytoplasm. Its function is as follows. Associates with aggregated proteins, together with IbpB, to stabilize and protect them from irreversible denaturation and extensive proteolysis during heat shock and oxidative stress. Aggregated proteins bound to the IbpAB complex are more efficiently refolded and reactivated by the ATP-dependent chaperone systems ClpB and DnaK/DnaJ/GrpE. Its activity is ATP-independent. The protein is Small heat shock protein IbpA of Klebsiella pneumoniae (strain 342).